We begin with the raw amino-acid sequence, 352 residues long: Phospho-N-acetylmuramoyl-pentapeptide-transferase (352 aa).

10 helical membrane-spanning segments follow: residues 10–30 (YMFF…ALFL), 67–87 (TMGG…CADL), 88–108 (NNFY…IGLV), 129–149 (LLSQ…MGIN), 159–179 (YALF…IISS), 191–211 (GLAT…LYLS), 227–247 (GLGE…GFLW), 255–275 (VFMG…LGIV), 280–300 (ILLL…ILQV), and 329–349 (KIIV…LISI).

Belongs to the glycosyltransferase 4 family. MraY subfamily. Mg(2+) serves as cofactor.

Its subcellular location is the cell inner membrane. It catalyses the reaction UDP-N-acetyl-alpha-D-muramoyl-L-alanyl-gamma-D-glutamyl-meso-2,6-diaminopimeloyl-D-alanyl-D-alanine + di-trans,octa-cis-undecaprenyl phosphate = di-trans,octa-cis-undecaprenyl diphospho-N-acetyl-alpha-D-muramoyl-L-alanyl-D-glutamyl-meso-2,6-diaminopimeloyl-D-alanyl-D-alanine + UMP. Its pathway is cell wall biogenesis; peptidoglycan biosynthesis. Catalyzes the initial step of the lipid cycle reactions in the biosynthesis of the cell wall peptidoglycan: transfers peptidoglycan precursor phospho-MurNAc-pentapeptide from UDP-MurNAc-pentapeptide onto the lipid carrier undecaprenyl phosphate, yielding undecaprenyl-pyrophosphoryl-MurNAc-pentapeptide, known as lipid I. This chain is Phospho-N-acetylmuramoyl-pentapeptide-transferase, found in Campylobacter lari (strain RM2100 / D67 / ATCC BAA-1060).